The sequence spans 324 residues: MTASKARIVFMGTPDFAVASLDALIGEGYNVVGVVTIPDKSIGKHQSIPQFSPIKQYALSHEIPLLQPKKLKDPDFLKSLKAWNTDLQVVVSFRLLPEVVWNMPSLGTFNLHASLLPQYRGAAPINWAIINGEKETGVTTFFLDYEIDTGKIIAQECIPIKETDNAGTIHDELMYLGAKLVVKTTNDILSGTVKLISQDETNLGKQKLKIAPKIFREVCKIDWNKTTREIHNFIRGLSPYPGAWTELTCVKGMTFPFKIFETEKADCHDYSLPVGTIVSDKKVYIDVRTKDGFIRLRNVQLAGKKRMPVTDFLKGNAYLLSLHF.

114–117 (SLLP) serves as a coordination point for (6S)-5,6,7,8-tetrahydrofolate.

Belongs to the Fmt family.

The enzyme catalyses L-methionyl-tRNA(fMet) + (6R)-10-formyltetrahydrofolate = N-formyl-L-methionyl-tRNA(fMet) + (6S)-5,6,7,8-tetrahydrofolate + H(+). Functionally, attaches a formyl group to the free amino group of methionyl-tRNA(fMet). The formyl group appears to play a dual role in the initiator identity of N-formylmethionyl-tRNA by promoting its recognition by IF2 and preventing the misappropriation of this tRNA by the elongation apparatus. The polypeptide is Methionyl-tRNA formyltransferase (Azobacteroides pseudotrichonymphae genomovar. CFP2).